The chain runs to 1500 residues: ABC transporter G family member 42 (1500 aa).

The tract at residues 26 to 56 (VDEAFMPQNSGGGGGSRGRRRSGRGGTADDD) is disordered. The region spanning 182–455 (LGLVGVRPGR…FESCGFRCPE (274 aa)) is the ABC transporter 1 domain. Residue 215–222 (GPPSSGKT) coordinates ATP. An ABC transmembrane type-2 1 domain is found at 533–746 (ELLKASFAKE…GYNALAVNEF (214 aa)). 7 consecutive transmembrane segments (helical) span residues 551-571 (FVYI…STVF), 584-604 (GFVY…NGFA), 639-659 (IPFS…TIGF), 670-690 (LLLV…TAGL), 695-715 (IIAQ…GGFL), 724-744 (WWIW…LAVN), and 783-803 (FWIG…LFTL). Residues 822–834 (TAKEAEGNGDARH) show a composition bias toward basic and acidic residues. A disordered region spans residues 822 to 850 (TAKEAEGNGDARHTVRNGSTKSNGGNHKE). Over residues 837-846 (RNGSTKSNGG) the composition is skewed to polar residues. Positions 894 to 1151 (MSFDDVNYYV…KMIEYFEAIP (258 aa)) constitute an ABC transporter 2 domain. 939 to 946 (GVSGAGKT) contributes to the ATP binding site. Positions 1224–1438 (GQFRACLWKQ…TVYGLIVTQY (215 aa)) constitute an ABC transmembrane type-2 2 domain. Helical transmembrane passes span 1245–1265 (LVRF…FWKI), 1277–1297 (MVIG…CATV), 1331–1351 (IPYV…MMSF), 1358–1378 (FFWF…YGMM), 1388–1408 (VAAI…GFFI), 1416–1436 (WWIW…LIVT), and 1472–1492 (VVAP…AICI).

It belongs to the ABC transporter superfamily. ABCG family. PDR (TC 3.A.1.205) subfamily.

It is found in the membrane. Its function is as follows. May be a general defense protein. This is ABC transporter G family member 42 from Oryza sativa subsp. japonica (Rice).